Reading from the N-terminus, the 284-residue chain is Bifunctional protein FolD 2 (284 aa).

Residues Gly-164–Gly-166, Ser-189, and Ile-230 contribute to the NADP(+) site.

It belongs to the tetrahydrofolate dehydrogenase/cyclohydrolase family. In terms of assembly, homodimer.

It carries out the reaction (6R)-5,10-methylene-5,6,7,8-tetrahydrofolate + NADP(+) = (6R)-5,10-methenyltetrahydrofolate + NADPH. The enzyme catalyses (6R)-5,10-methenyltetrahydrofolate + H2O = (6R)-10-formyltetrahydrofolate + H(+). Its pathway is one-carbon metabolism; tetrahydrofolate interconversion. In terms of biological role, catalyzes the oxidation of 5,10-methylenetetrahydrofolate to 5,10-methenyltetrahydrofolate and then the hydrolysis of 5,10-methenyltetrahydrofolate to 10-formyltetrahydrofolate. The sequence is that of Bifunctional protein FolD 2 from Desulfitobacterium hafniense (strain Y51).